The chain runs to 192 residues: Ion-translocating oxidoreductase complex subunit B (192 aa).

A hydrophobic region spans residues 1-26 (MNAIWIAVAAVSLLGLAFGAILGYAS). One can recognise a 4Fe-4S domain in the interval 32 to 91 (EDDPVVEKIDEILPQSQCGQCGYPGCRPYAEAISCNGEKINRCAPGGEAVMLKIAELLNV). Residues cysteine 49, cysteine 52, cysteine 57, cysteine 74, cysteine 117, cysteine 120, cysteine 123, cysteine 127, cysteine 147, cysteine 150, cysteine 153, and cysteine 157 each coordinate [4Fe-4S] cluster. 4Fe-4S ferredoxin-type domains are found at residues 108-137 (MVAVIDENNCIGCTKCIQACPVDAIVGATR) and 138-167 (VMHTVMSDLCTGCNLCVDPCPTHCISLQPV).

Belongs to the 4Fe4S bacterial-type ferredoxin family. RnfB subfamily. The complex is composed of six subunits: RsxA, RsxB, RsxC, RsxD, RsxE and RsxG. It depends on [4Fe-4S] cluster as a cofactor.

Its subcellular location is the cell inner membrane. Functionally, part of a membrane-bound complex that couples electron transfer with translocation of ions across the membrane. Required to maintain the reduced state of SoxR. The polypeptide is Ion-translocating oxidoreductase complex subunit B (Shigella boydii serotype 4 (strain Sb227)).